Reading from the N-terminus, the 350-residue chain is MNLAWKEIKFYKFRFILIMFIIFLMAIMVLFISGLAQGLARENISIFDQIKGNQFVVQKMKEPQLEKSILSRSKQDNISKIIDEKPFKMAGKTFKINGNEENVMAINSVKNHQPNLKSGHYPKNGNQIAINEKLTAEGLYLDDKVKVKGDDTTYKVVGILKNTMYSHSNIVMMDQSKIEQSSNVATFYVTNQLSKSDKNKINHIKGVQTATTDNITSNIASYKAEQTPLDMMIISLYIITAIVLSAFFYVMTIQKTSEIGILKAIGITTKHLLTSLILQISMITFIGVAIAEVVILLISQILPVSMPFHIDMHNIIIVLVIFMIVGLIGTSLSFIKLIKIDPIEAIGGGQ.

The next 4 helical transmembrane spans lie at 15–35 (FILI…ISGL), 233–253 (IISL…VMTI), 276–296 (LILQ…VVIL), and 315–335 (IIIV…LSFI).

Belongs to the ABC-4 integral membrane protein family. HrtB subfamily. In terms of assembly, the complex is composed of two ATP-binding proteins (HrtA), two transmembrane proteins (HrtB) and a solute-binding protein.

Its subcellular location is the cell membrane. Part of the ABC transporter complex hrt involved in hemin import. Responsible for the translocation of the substrate across the membrane. This Staphylococcus epidermidis (strain ATCC 35984 / DSM 28319 / BCRC 17069 / CCUG 31568 / BM 3577 / RP62A) protein is Putative hemin transport system permease protein HrtB (hrtB).